The primary structure comprises 143 residues: Hemoglobin cathodic subunit alpha (143 aa).

The residue at position 1 (S1) is an N-acetylserine. The region spanning 1-143 (SLAPGDKTVV…VCAALSDKYR (143 aa)) is the Globin domain. H59 contacts O2. H89 is a binding site for heme b.

It belongs to the globin family. As to quaternary structure, heterotetramer of two alpha chains and two beta chains. In terms of tissue distribution, red blood cells.

Involved in oxygen transport from gills to the various peripheral tissues. In Gymnothorax unicolor (Brown moray), this protein is Hemoglobin cathodic subunit alpha.